The chain runs to 249 residues: Aspartate/glutamate leucyltransferase (249 aa).

The protein belongs to the R-transferase family. Bpt subfamily.

Its subcellular location is the cytoplasm. It carries out the reaction N-terminal L-glutamyl-[protein] + L-leucyl-tRNA(Leu) = N-terminal L-leucyl-L-glutamyl-[protein] + tRNA(Leu) + H(+). The enzyme catalyses N-terminal L-aspartyl-[protein] + L-leucyl-tRNA(Leu) = N-terminal L-leucyl-L-aspartyl-[protein] + tRNA(Leu) + H(+). Functions in the N-end rule pathway of protein degradation where it conjugates Leu from its aminoacyl-tRNA to the N-termini of proteins containing an N-terminal aspartate or glutamate. This is Aspartate/glutamate leucyltransferase from Brucella canis (strain ATCC 23365 / NCTC 10854 / RM-666).